Consider the following 259-residue polypeptide: Small ribosomal subunit protein uS2 (259 aa).

This sequence belongs to the universal ribosomal protein uS2 family.

The protein is Small ribosomal subunit protein uS2 of Dinoroseobacter shibae (strain DSM 16493 / NCIMB 14021 / DFL 12).